The chain runs to 91 residues: Acylphosphatase (91 aa).

Residues 3 to 91 (TVTMKVTGLV…EKFTRFSVVY (89 aa)) form the Acylphosphatase-like domain. Residues arginine 18 and asparagine 36 contribute to the active site.

Belongs to the acylphosphatase family.

It carries out the reaction an acyl phosphate + H2O = a carboxylate + phosphate + H(+). The chain is Acylphosphatase (acyP) from Lactobacillus gasseri (strain ATCC 33323 / DSM 20243 / BCRC 14619 / CIP 102991 / JCM 1131 / KCTC 3163 / NCIMB 11718 / NCTC 13722 / AM63).